The following is a 254-amino-acid chain: tRNA uridine(34) hydroxylase (254 aa).

Residues 123–217 enclose the Rhodanese domain; sequence QDPNVILLDT…YLESIPEGES (95 aa). Cysteine 177 serves as the catalytic Cysteine persulfide intermediate.

The protein belongs to the TrhO family.

It carries out the reaction uridine(34) in tRNA + AH2 + O2 = 5-hydroxyuridine(34) in tRNA + A + H2O. Catalyzes oxygen-dependent 5-hydroxyuridine (ho5U) modification at position 34 in tRNAs. The chain is tRNA uridine(34) hydroxylase from Legionella pneumophila (strain Lens).